The following is a 231-amino-acid chain: Cytochrome c oxidase subunit 2 (231 aa).

The Mitochondrial intermembrane portion of the chain corresponds to 1-14; that stretch reads MAHPSQLGLQDAAS. Residues 15–45 traverse the membrane as a helical segment; sequence PVMEELLHFHDHALMIVFLISTLVFYIILAM. Topologically, residues 46–59 are mitochondrial matrix; the sequence is MTTKMTDKYILDAQ. Residues 60–87 form a helical membrane-spanning segment; it reads EIEIVWTLLPAIVLILVALPSLRILYLI. Topologically, residues 88 to 231 are mitochondrial intermembrane; that stretch reads DEVENPHLTI…WSSSMLEEAX (144 aa). Residues H161, C196, E198, C200, H204, and M207 each coordinate Cu cation. Residue E198 participates in Mg(2+) binding.

Belongs to the cytochrome c oxidase subunit 2 family. As to quaternary structure, component of the cytochrome c oxidase (complex IV, CIV), a multisubunit enzyme composed of 14 subunits. The complex is composed of a catalytic core of 3 subunits MT-CO1, MT-CO2 and MT-CO3, encoded in the mitochondrial DNA, and 11 supernumerary subunits COX4I, COX5A, COX5B, COX6A, COX6B, COX6C, COX7A, COX7B, COX7C, COX8 and NDUFA4, which are encoded in the nuclear genome. The complex exists as a monomer or a dimer and forms supercomplexes (SCs) in the inner mitochondrial membrane with NADH-ubiquinone oxidoreductase (complex I, CI) and ubiquinol-cytochrome c oxidoreductase (cytochrome b-c1 complex, complex III, CIII), resulting in different assemblies (supercomplex SCI(1)III(2)IV(1) and megacomplex MCI(2)III(2)IV(2)). Found in a complex with TMEM177, COA6, COX18, COX20, SCO1 and SCO2. Interacts with TMEM177 in a COX20-dependent manner. Interacts with COX20. Interacts with COX16. It depends on Cu cation as a cofactor.

The protein resides in the mitochondrion inner membrane. The enzyme catalyses 4 Fe(II)-[cytochrome c] + O2 + 8 H(+)(in) = 4 Fe(III)-[cytochrome c] + 2 H2O + 4 H(+)(out). Component of the cytochrome c oxidase, the last enzyme in the mitochondrial electron transport chain which drives oxidative phosphorylation. The respiratory chain contains 3 multisubunit complexes succinate dehydrogenase (complex II, CII), ubiquinol-cytochrome c oxidoreductase (cytochrome b-c1 complex, complex III, CIII) and cytochrome c oxidase (complex IV, CIV), that cooperate to transfer electrons derived from NADH and succinate to molecular oxygen, creating an electrochemical gradient over the inner membrane that drives transmembrane transport and the ATP synthase. Cytochrome c oxidase is the component of the respiratory chain that catalyzes the reduction of oxygen to water. Electrons originating from reduced cytochrome c in the intermembrane space (IMS) are transferred via the dinuclear copper A center (CU(A)) of subunit 2 and heme A of subunit 1 to the active site in subunit 1, a binuclear center (BNC) formed by heme A3 and copper B (CU(B)). The BNC reduces molecular oxygen to 2 water molecules using 4 electrons from cytochrome c in the IMS and 4 protons from the mitochondrial matrix. The protein is Cytochrome c oxidase subunit 2 (MT-CO2) of Latimeria chalumnae (Coelacanth).